Reading from the N-terminus, the 431-residue chain is UPF0597 protein TDE_2144 (431 aa).

It belongs to the UPF0597 family.

This Treponema denticola (strain ATCC 35405 / DSM 14222 / CIP 103919 / JCM 8153 / KCTC 15104) protein is UPF0597 protein TDE_2144.